A 572-amino-acid chain; its full sequence is Cytochrome P450 monooxygenase xilC (572 aa).

Residue Cys-515 coordinates heme.

This sequence belongs to the cytochrome P450 family. Heme is required as a cofactor.

The protein operates within secondary metabolite biosynthesis. Functionally, cytochrome P450 monooxygenase; part of the gene cluster that mediates the biosynthesis of the 6-methyl-2-pyrone derivative xylariolide D. XilC hydroxylates the 5-alkyl-6-methyl-2-pyrone backbone called prexylariolide D, produced by the highly reducing polyketide synthase xilA, on its side chain to form xylariolide D. The sequence is that of Cytochrome P450 monooxygenase xilC from Penicillium rubens (strain ATCC 28089 / DSM 1075 / NRRL 1951 / Wisconsin 54-1255) (Penicillium chrysogenum).